A 729-amino-acid chain; its full sequence is Cytoplasmic polyadenylation element-binding protein 4 (729 aa).

Disordered regions lie at residues F20–T49 and E78–I133. A compositionally biased stretch (basic residues) spans F24 to Q35. Low complexity predominate over residues Q83–L96. A phosphoserine mark is found at S97, S99, and S137. Residues F218–L328 are disordered. A compositionally biased stretch (basic residues) spans H232–Q249. S252 and S255 each carry phosphoserine. Residues W285–S300 show a composition bias toward low complexity. The span at P301 to Q313 shows a compositional bias: gly residues. T326 carries the post-translational modification Phosphothreonine. Phosphoserine occurs at positions 330 and 332. 2 consecutive RRM domains span residues R472–L563 and K580–L662. The interval K541 to Y543 is RNA-binding. Positions 667, 675, 684, 689, 694, 697, 702, and 710 each coordinate Zn(2+).

It belongs to the RRM CPEB family. As to quaternary structure, interacts with TOB1. As to expression, expressed in pancreas in islets and ductal cells (at protein level). Expressed in melanocytes.

The protein localises to the cytoplasm. It localises to the cell projection. It is found in the dendrite. The protein resides in the dendritic spine. Its subcellular location is the postsynaptic density. The protein localises to the axon. It localises to the growth cone. It is found in the endoplasmic reticulum. The protein resides in the perinuclear region. Its function is as follows. Sequence-specific RNA-binding protein that binds to the cytoplasmic polyadenylation element (CPE), an uridine-rich sequence element (consensus sequence 5'-UUUUUAU-3') within the mRNA 3'-UTR. RNA binding results in a clear conformational change analogous to the Venus fly trap mechanism. Regulates activation of unfolded protein response (UPR) in the process of adaptation to ER stress in liver, by maintaining translation of CPE-regulated mRNAs in conditions in which global protein synthesis is inhibited. Required for cell cycle progression, specifically for cytokinesis and chromosomal segregation. Plays a role as an oncogene promoting tumor growth and progression by positively regulating translation of t-plasminogen activator/PLAT. Stimulates proliferation of melanocytes. In contrast to CPEB1 and CPEB3, does not play role in synaptic plasticity, learning and memory. In Homo sapiens (Human), this protein is Cytoplasmic polyadenylation element-binding protein 4 (CPEB4).